Reading from the N-terminus, the 346-residue chain is Elongation factor Ts (346 aa).

Residues 80–83 form an involved in Mg(2+) ion dislocation from EF-Tu region; that stretch reads TDFV.

The protein belongs to the EF-Ts family.

It localises to the cytoplasm. Associates with the EF-Tu.GDP complex and induces the exchange of GDP to GTP. It remains bound to the aminoacyl-tRNA.EF-Tu.GTP complex up to the GTP hydrolysis stage on the ribosome. The chain is Elongation factor Ts from Streptococcus suis (strain 98HAH33).